A 305-amino-acid polypeptide reads, in one-letter code: Achromobactin-binding periplasmic protein (305 aa).

A signal peptide spans M1–A29. One can recognise a Fe/B12 periplasmic-binding domain in the interval R37–G302.

Belongs to the bacterial solute-binding protein 8 family.

It localises to the periplasm. Binds citrate- or chloride-dependent Fe(3+); part of the binding-protein-dependent transport system CbrABCD for uptake of the siderophore achromobactin. The polypeptide is Achromobactin-binding periplasmic protein (cbrA) (Dickeya dadantii (strain 3937) (Erwinia chrysanthemi (strain 3937))).